The sequence spans 239 residues: tRNA (guanine-N(7)-)-methyltransferase (239 aa).

Positions 69, 94, 121, and 144 each coordinate S-adenosyl-L-methionine. Asp144 is an active-site residue. Lys148 contacts substrate. The interval 150–155 (RHNKRR) is interaction with RNA. Residues Asp180 and 217-220 (TKFE) contribute to the substrate site.

This sequence belongs to the class I-like SAM-binding methyltransferase superfamily. TrmB family. Monomer.

The enzyme catalyses guanosine(46) in tRNA + S-adenosyl-L-methionine = N(7)-methylguanosine(46) in tRNA + S-adenosyl-L-homocysteine. It functions in the pathway tRNA modification; N(7)-methylguanine-tRNA biosynthesis. Catalyzes the formation of N(7)-methylguanine at position 46 (m7G46) in tRNA. This is tRNA (guanine-N(7)-)-methyltransferase from Pectobacterium atrosepticum (strain SCRI 1043 / ATCC BAA-672) (Erwinia carotovora subsp. atroseptica).